A 249-amino-acid chain; its full sequence is MMEKPEGLKLIDENGRRIDGRKKYELRPIKMKVGVLKNANGSAYIEWGRNKIIAAVYGPRELHSKHLQRPDRAILRVRYNMAPFSVEERKKPGPDRRSIEISKVIKGALEPALILEMFPRTSIDVFIEVLQADAGTRVAGITAASLALADAGIPMRDLVAACAAGKIEGEIVLDLNKEEDNYGEADVPVAIMPLKNDITLLQMDGYLTKEEFIEAVRLAIKGAKAVYQKQREALKEKYLKIAQEVEESE.

It belongs to the RNase PH family. Rrp41 subfamily. In terms of assembly, component of the archaeal exosome complex. Forms a hexameric ring-like arrangement composed of 3 Rrp41-Rrp42 heterodimers. The hexameric ring associates with a trimer of Rrp4 and/or Csl4 subunits.

Its subcellular location is the cytoplasm. Its function is as follows. Catalytic component of the exosome, which is a complex involved in RNA degradation. Has 3'-&gt;5' exoribonuclease activity. Can also synthesize heteromeric RNA-tails. The sequence is that of Exosome complex component Rrp41 from Pyrococcus horikoshii (strain ATCC 700860 / DSM 12428 / JCM 9974 / NBRC 100139 / OT-3).